The sequence spans 1003 residues: Putative helicase MOV-10 (1003 aa).

At Lys148 the chain carries N6-acetyllysine. Phosphothreonine is present on residues Thr160 and Thr254. Ser432 carries the post-translational modification Phosphoserine. Residue 524-531 (GPPGTGKT) participates in ATP binding. A DEAG box motif is present at residues 645 to 648 (DEAG). The tract at residues 921 to 965 (NPLLLGHDPDWKVFLEFCKENGGYTGCPFPAKLDLQQGQNLLQGL) is interaction with AGO2 and APOBEC3G. A disordered region spans residues 968 to 1003 (LSPSTSGLKSHDYLPQEREGEEGLSLQVEPEWRNEL). Ser969 and Ser977 each carry phosphoserine. Positions 976–985 (KSHDYLPQER) are enriched in basic and acidic residues.

The protein belongs to the DNA2/NAM7 helicase family. SDE3 subfamily. Interacts with DICER1, AGO2, TARBP2, EIF6 and RPL7A (60S ribosome subunit); they form a large RNA-induced silencing complex (RISC). Interacts with APOBEC3G in an RNA-dependent manner. Interacts with TRIM71 (via NHL repeats) in an RNA-dependent manner. Interacts with both protein products of LIRE1, ORF1p and ORF2p. Interacts with TUT4 and, to a lesser extent, TUT7; the interactions are RNA-dependent. Interacts with AGO2, TNRC6B and UPF1; the interactions are direct and RNA-dependent. Interacts with FMR1; this interaction is direct, occurs in an RNA-dependent manner on polysomes and induces association of MOV10 with RNAs. Interacts with SHFL; the interaction increases in presence of RNA. Interacts with DHX34; the interaction is-RNA independent. Interacts with RBM46. Post-translationally, ubiquitinated by the DCX(DCAF12) complex that specifically recognizes the glutamate-leucine (Glu-Leu) degron at the C-terminus, leading to its degradation.

Its subcellular location is the cytoplasm. It localises to the P-body. It is found in the cytoplasmic ribonucleoprotein granule. The protein resides in the stress granule. The protein localises to the nucleus. It carries out the reaction ATP + H2O = ADP + phosphate + H(+). Its function is as follows. 5' to 3' RNA helicase that is involved in a number of cellular roles ranging from mRNA metabolism and translation, modulation of viral infectivity, inhibition of retrotransposition, or regulation of synaptic transmission. Plays an important role in innate antiviral immunity by promoting type I interferon production. Mechanistically, specifically uses IKKepsilon/IKBKE as the mediator kinase for IRF3 activation. Contributes to UPF1 mRNA target degradation by translocation along 3' UTRs. Required for microRNA (miRNA)-mediated gene silencing by the RNA-induced silencing complex (RISC). Required for both miRNA-mediated translational repression and miRNA-mediated cleavage of complementary mRNAs by RISC. In cooperation with FMR1, regulates miRNA-mediated translational repression by AGO2. Restricts retrotransposition of long interspersed element-1 (LINE-1) in cooperation with TUT4 and TUT7 counteracting the RNA chaperonne activity of L1RE1. Facilitates LINE-1 uridylation by TUT4 and TUT7. Required for embryonic viability and for normal central nervous system development and function. Plays two critical roles in early brain development: suppresses retroelements in the nucleus by directly inhibiting cDNA synthesis, while regulates cytoskeletal mRNAs to influence neurite outgrowth in the cytosol. May function as a messenger ribonucleoprotein (mRNP) clearance factor. This chain is Putative helicase MOV-10 (MOV10), found in Bos taurus (Bovine).